Here is a 310-residue protein sequence, read N- to C-terminus: MRRHLSLFLGSLVIGLALLIAPAASWAYPFWAQQNYDSPREATGKIVCANCHLAKKLTQAEVPQSVLPDSVFTASVRVPYENGLQEIGADGSDVGLQVGAVVMLPDGFTLAPQDRWTDEIKEETEGVYFTQYSDEQPNILLVGPIPGDEHQEIVFPVLSPDPATDSNIHFGKYQIHVGGNRGRGQVYPTGDKSNNTIYTAPASGTIASIEPGDNGASVVSIKAADGSSVSETIPVGPEVLVSVGDSIEAGTALTNDPNVGGFGQVDAEIVLQNPVRIYGLLAFFAAVALAQIMLVLKKRQIEKVQAAEGV.

Positions 1–27 (MRRHLSLFLGSLVIGLALLIAPAASWA) are cleaved as a signal peptide. Tyrosine 28, cysteine 48, cysteine 51, and histidine 52 together coordinate heme. Residues 277–297 (IYGLLAFFAAVALAQIMLVLK) traverse the membrane as a helical segment.

Belongs to the cytochrome f family. As to quaternary structure, the 4 large subunits of the cytochrome b6-f complex are cytochrome b6, subunit IV (17 kDa polypeptide, PetD), cytochrome f and the Rieske protein, while the 4 small subunits are PetG, PetL, PetM and PetN. The complex functions as a dimer. Heme serves as cofactor.

The protein resides in the cellular thylakoid membrane. Component of the cytochrome b6-f complex, which mediates electron transfer between photosystem II (PSII) and photosystem I (PSI), cyclic electron flow around PSI, and state transitions. The chain is Cytochrome f from Synechococcus sp. (strain CC9605).